Here is a 958-residue protein sequence, read N- to C-terminus: Probable protein phosphatase DDB_G0282105 (958 aa).

2 helical membrane passes run 2 to 22 and 26 to 46; these read VLMMDIKIMSAFSILFLSLMV and FLEFLANTVYAAILFIIILFF. Residues 142 to 330 adopt a coiled-coil conformation; it reads SASQQSELTN…KDKERERSSS (189 aa). Basic and acidic residues predominate over residues 312–328; the sequence is QEKEKQKLEKDKERERS. 5 disordered regions span residues 312 to 361, 380 to 421, 445 to 475, 491 to 525, and 619 to 659; these read QEKE…PIPI, SVNG…PKFK, HLGSDFFTPANTTTSTTTTTSTTSTSTTTPI, ITSPTTNTTNDILSSSSSSSSSSSSLLTTNAILSP, and NNNN…NDNK. Composition is skewed to low complexity over residues 329–361, 390–401, 452–475, 491–515, and 619–655; these read SSFSSDISSSSTTSTTASTFLSSSPSKSIPIPI, SSVSPPSSSYLR, TPANTTTSTTTTTSTTSTSTTTPI, ITSPTTNTTNDILSSSSSSSSSSSS, and NNNNKNNIEESNNNNNNNNNNNNNNNNNNNNNNNNNK. Residues 613–666 are a coiled coil; it reads NFLKTNNNNNKNNIEESNNNNNNNNNNNNNNNNNNNNNNNNNKNDNKEVNSKLE. The PPM-type phosphatase domain maps to 675–958; that stretch reads KIGLRRAKKK…DNVTVIIVKL (284 aa). Positions 722, 723, 905, and 949 each coordinate Mn(2+).

The protein in the C-terminal section; belongs to the PP2C family. Requires Mg(2+) as cofactor. Mn(2+) serves as cofactor.

It localises to the membrane. It catalyses the reaction O-phospho-L-seryl-[protein] + H2O = L-seryl-[protein] + phosphate. It carries out the reaction O-phospho-L-threonyl-[protein] + H2O = L-threonyl-[protein] + phosphate. The sequence is that of Probable protein phosphatase DDB_G0282105 from Dictyostelium discoideum (Social amoeba).